The chain runs to 380 residues: Cytochrome b (380 aa).

A run of 4 helical transmembrane segments spans residues 34 to 54 (FGSLLGICLMTQILTGLLLAM), 78 to 99 (WLIRNLHANGASFFFICIYLHI), 114 to 134 (WNTGIILLLTLMATAFVGYVL), and 179 to 199 (FFALHFLLPFAIAGLTLIHLT). Histidine 84 and histidine 98 together coordinate heme b. Histidine 183 and histidine 197 together coordinate heme b. An a ubiquinone-binding site is contributed by histidine 202. 4 consecutive transmembrane segments (helical) span residues 227–247 (LKDILGFALMVLPLTSLALFS), 289–309 (LGGVLALAASVLVLFLSPFLH), 321–341 (LSQLLFWILVTNLFILTWVGS), and 348–368 (FIIIGQLASITYFTILLILFP).

It belongs to the cytochrome b family. In terms of assembly, the cytochrome bc1 complex contains 11 subunits: 3 respiratory subunits (MT-CYB, CYC1 and UQCRFS1), 2 core proteins (UQCRC1 and UQCRC2) and 6 low-molecular weight proteins (UQCRH/QCR6, UQCRB/QCR7, UQCRQ/QCR8, UQCR10/QCR9, UQCR11/QCR10 and a cleavage product of UQCRFS1). This cytochrome bc1 complex then forms a dimer. Heme b is required as a cofactor.

Its subcellular location is the mitochondrion inner membrane. Its function is as follows. Component of the ubiquinol-cytochrome c reductase complex (complex III or cytochrome b-c1 complex) that is part of the mitochondrial respiratory chain. The b-c1 complex mediates electron transfer from ubiquinol to cytochrome c. Contributes to the generation of a proton gradient across the mitochondrial membrane that is then used for ATP synthesis. This Macronectes giganteus (Southern giant petrel) protein is Cytochrome b (MT-CYB).